A 29-amino-acid polypeptide reads, in one-letter code: Cytochrome b6-f complex subunit 8 (29 aa).

A helical membrane pass occupies residues Met-3–Val-23.

The protein belongs to the PetN family. As to quaternary structure, the 4 large subunits of the cytochrome b6-f complex are cytochrome b6, subunit IV (17 kDa polypeptide, PetD), cytochrome f and the Rieske protein, while the 4 small subunits are PetG, PetL, PetM and PetN. The complex functions as a dimer.

Its subcellular location is the plastid. It localises to the chloroplast thylakoid membrane. Its function is as follows. Component of the cytochrome b6-f complex, which mediates electron transfer between photosystem II (PSII) and photosystem I (PSI), cyclic electron flow around PSI, and state transitions. The protein is Cytochrome b6-f complex subunit 8 of Cucumis sativus (Cucumber).